The following is a 201-amino-acid chain: MLAFTLRFIKNKRYLATLAGALVIIAGLTSQHAWSGNGLPQINGKALAALAKQHPVVVLFRHAERCDRSDNTCLSDSTGITVNGAQDARALGKAFSADIQNYNLYSSNTVRTIQSATWFSAGRSLTVDKKMMDCGSGIYASINTLLKKSQNKNIVIFTHNHCLTYIAKNKRGVKFDPDYLDALVMHAENGKLFLDGEFVPG.

Residues 1 to 35 (MLAFTLRFIKNKRYLATLAGALVIIAGLTSQHAWS) form the signal peptide.

It belongs to the phosphoglycerate mutase family. Ais subfamily.

It is found in the periplasm. Its pathway is bacterial outer membrane biogenesis; lipopolysaccharide metabolism. Its function is as follows. Catalyzes the dephosphorylation of heptose(II) of the outer membrane lipopolysaccharide core. This is Lipopolysaccharide core heptose(II)-phosphate phosphatase from Salmonella schwarzengrund (strain CVM19633).